A 78-amino-acid polypeptide reads, in one-letter code: D-alanyl carrier protein (78 aa).

The Carrier domain occupies 1-78 (MAFRENVLEI…MIITQLEALK (78 aa)). Ser36 carries the post-translational modification O-(pantetheine 4'-phosphoryl)serine.

This sequence belongs to the DltC family. In terms of processing, 4'-phosphopantetheine is transferred from CoA to a specific serine of apo-DCP.

The protein localises to the cytoplasm. Its pathway is cell wall biogenesis; lipoteichoic acid biosynthesis. Its function is as follows. Carrier protein involved in the D-alanylation of lipoteichoic acid (LTA). The loading of thioester-linked D-alanine onto DltC is catalyzed by D-alanine--D-alanyl carrier protein ligase DltA. The DltC-carried D-alanyl group is further transferred to cell membrane phosphatidylglycerol (PG) by forming an ester bond, probably catalyzed by DltD. D-alanylation of LTA plays an important role in modulating the properties of the cell wall in Gram-positive bacteria, influencing the net charge of the cell wall. This is D-alanyl carrier protein from Listeria innocua serovar 6a (strain ATCC BAA-680 / CLIP 11262).